Reading from the N-terminus, the 314-residue chain is Methionyl-tRNA formyltransferase (314 aa).

113–116 (SILP) contacts (6S)-5,6,7,8-tetrahydrofolate.

Belongs to the Fmt family.

The catalysed reaction is L-methionyl-tRNA(fMet) + (6R)-10-formyltetrahydrofolate = N-formyl-L-methionyl-tRNA(fMet) + (6S)-5,6,7,8-tetrahydrofolate + H(+). In terms of biological role, attaches a formyl group to the free amino group of methionyl-tRNA(fMet). The formyl group appears to play a dual role in the initiator identity of N-formylmethionyl-tRNA by promoting its recognition by IF2 and preventing the misappropriation of this tRNA by the elongation apparatus. The polypeptide is Methionyl-tRNA formyltransferase (Photobacterium profundum (strain SS9)).